Consider the following 500-residue polypeptide: Phenylalanine--tRNA ligase alpha subunit (500 aa).

L-phenylalanine-binding positions include T343, 382–384 (QID), and F423. E425 lines the Mg(2+) pocket. Position 448 (F448) interacts with L-phenylalanine.

This sequence belongs to the class-II aminoacyl-tRNA synthetase family. Phe-tRNA synthetase alpha subunit type 2 subfamily. In terms of assembly, tetramer of two alpha and two beta subunits. Mg(2+) is required as a cofactor.

It is found in the cytoplasm. It carries out the reaction tRNA(Phe) + L-phenylalanine + ATP = L-phenylalanyl-tRNA(Phe) + AMP + diphosphate + H(+). The polypeptide is Phenylalanine--tRNA ligase alpha subunit (Pyrococcus abyssi (strain GE5 / Orsay)).